We begin with the raw amino-acid sequence, 162 residues long: Transcription antitermination protein NusB (162 aa).

The protein belongs to the NusB family.

Its function is as follows. Involved in transcription antitermination. Required for transcription of ribosomal RNA (rRNA) genes. Binds specifically to the boxA antiterminator sequence of the ribosomal RNA (rrn) operons. The protein is Transcription antitermination protein NusB of Mycobacterium sp. (strain JLS).